The following is a 140-amino-acid chain: Pro-variola growth factor (140 aa).

The first 18 residues, 1-18 (MSMKYLMLLFAAMIIRSF), serve as a signal peptide directing secretion. The Extracellular portion of the chain corresponds to 19–100 (ANSGNAIETT…SEKPNTTTSY (82 aa)). Asn34 carries N-linked (GlcNAc...) asparagine; by host glycosylation. An EGF-like domain is found at 41 to 81 (AIRLCGPEGDRYCFHGICIHARDIDGMYCRCSHGYTGIRCQ). 3 disulfides stabilise this stretch: Cys45-Cys58, Cys53-Cys69, and Cys71-Cys80. Asn95 carries N-linked (GlcNAc...) asparagine; by host glycosylation. A helical membrane pass occupies residues 101 to 121 (IPSPGIVLVLLVSIIVCCLLF). Residues 122-140 (VYRFTRRTNKLPLQDMVVP) are Cytoplasmic-facing.

This sequence belongs to the orthopoxvirus OPG019 family. In terms of assembly, variola growth factor interacts with host EGFR and promotes EGFR dimerization.

The protein resides in the host membrane. It localises to the secreted. Its function is as follows. Stimulates cellular proliferation (hyperplasia)and mobility around infected cells to promote rapid and efficient spread of infection. This effect is beneficial for virus replication in vivo, because poxviruses replicate possibly better in proliferating cells than in quiescent cells. Acts by binding host EGFR, inducing its dimerization, autophosphorylation and leading to activation of several cellular pathways regulating cell proliferation or cell survival. The activation by host EGFR of mitogen activated protein kinases (MAPK) and extracellular-signal regulated kinases (ERK) are essential for the positive effect of vaccinia growth factor on poxvirus virulence in vivo. The sequence is that of Pro-variola growth factor (OPG019) from Variola virus (isolate Human/India/Ind3/1967) (VARV).